The chain runs to 273 residues: L-cysteine S-thiosulfotransferase subunit SoxA (273 aa).

The signal sequence occupies residues 1-24 (MKKTVTAVALLCALSSTAIAPTFA). An intrachain disulfide couples Cys-74 to Cys-110. The region spanning 162–273 (EMYELGKRMF…GVMLTPGIKR (112 aa)) is the Cytochrome c domain. Residues Cys-182 and His-186 each contribute to the heme site. A substrate-binding site is contributed by Arg-230. Cys-234 contacts heme. Residue Cys-234 is the Cysteine persulfide intermediate of the active site.

The protein belongs to the SoxA family. In terms of assembly, heterodimer of SoxA and SoxX. It depends on heme as a cofactor. Post-translationally, cysteine persulfide at Cys-234.

It is found in the periplasm. It catalyses the reaction L-cysteinyl-[SoxY protein] + thiosulfate + 2 Fe(III)-[cytochrome c] = S-sulfosulfanyl-L-cysteinyl-[SoxY protein] + 2 Fe(II)-[cytochrome c] + 2 H(+). The enzyme catalyses S-sulfanyl-L-cysteinyl-[SoxY protein] + thiosulfate + 2 Fe(III)-[cytochrome c] = S-(2-sulfodisulfanyl)-L-cysteinyl-[SoxY protein] + 2 Fe(II)-[cytochrome c] + 2 H(+). Its function is as follows. C-type monoheme cytochrome, which is part of the SoxAX cytochrome complex involved in sulfur oxidation. The SoxAX complex catalyzes the formation of a heterodisulfide bond between the conserved cysteine residue on a sulfur carrier SoxYZ complex subunit SoxY and thiosulfate or other inorganic sulfur substrates. This leads to the liberation of two electrons, which may be transferred from the SoxAX complex to another cytochrome c that then channels them into the respiratory electron transport chain. Some electrons may be used for reductive CO(2) fixation. The protein is L-cysteine S-thiosulfotransferase subunit SoxA of Hydrogenophilus thermoluteolus (Pseudomonas hydrogenothermophila).